The following is a 126-amino-acid chain: Large ribosomal subunit protein eL28 (126 aa).

Serine 2 carries the N-acetylserine modification.

It belongs to the eukaryotic ribosomal protein eL28 family.

This chain is Large ribosomal subunit protein eL28 (rpl-28), found in Caenorhabditis elegans.